Reading from the N-terminus, the 474-residue chain is NADH-ubiquinone oxidoreductase chain 4 (474 aa).

Helical transmembrane passes span 34 to 54 (SFFLMLVLALFCALFTFDLMF), 86 to 106 (LYGLILVFLCLLTGFVAISTV), 115 to 135 (LKFYLIFFQFFLAVLGFIKCS), 137 to 157 (LIAFFFFYEVLMLGSVLVVFF), 167 to 187 (AVIYFVAWTQLGSLFVLLACL), 211 to 231 (AMTIYSLLFVGFGIKFPIWPL), 242 to 262 (ASTGFSIYLSGFLVKTALFGF), 276 to 295 (TFFLAVLVAGVIDSSLNMWS), 302 to 322 (LVAYCTIQEMNLIAIFFLKGD), 325 to 345 (LIAYGFLFTIMHALMSTLMFF), 373 to 393 (ALAIIFMVLFFSGILGTLKFV), 405 to 425 (VSWPIGVIFVVVVSAIGLIGF), and 454 to 474 (YIIFLCFAGLIFLTFLPFLMI).

It belongs to the complex I subunit 4 family.

The protein resides in the mitochondrion membrane. It catalyses the reaction a ubiquinone + NADH + 5 H(+)(in) = a ubiquinol + NAD(+) + 4 H(+)(out). Core subunit of the mitochondrial membrane respiratory chain NADH dehydrogenase (Complex I) that is believed to belong to the minimal assembly required for catalysis. Complex I functions in the transfer of electrons from NADH to the respiratory chain. The immediate electron acceptor for the enzyme is believed to be ubiquinone. The protein is NADH-ubiquinone oxidoreductase chain 4 (ND4) of Paramecium tetraurelia.